The sequence spans 486 residues: MVESYKKIGSCNKMPCLVILTCIIMSNSLVNNNNMVQAKMTWTMKAAEEAEAVANINCSEHGRAFLDGIISEGSPKCECNTCYTGPDCSEKIQGCSADVASGDGLFLEEYWKQHKEASAVLVSPWHRMSYFFNPVSNFISFELEKTIKELHEVVGNAAAKDRYIVFGVGVTQLIHGLVISLSPNMTATPDAPESKVVAHAPFYPVFREQTKYFNKKGYVWAGNAANYVNVSNPEQYIEMVTSPNNPEGLLRHAVIKGCKSIYDMVYYWPHYTPIKYKADEDILLFTMSKFTGHSGSRFGWALIKDESVYNNLLNYMTKNTEGTPRETQLRSLKVLKEVVAMVKTQKGTMRDLNTFGFKKLRERWVNITALLDQSDRFSYQELPQSEYCNYFRRMRPPSPSYAWVKCEWEEDKDCYQTFQNGRINTQNGVGFEASSRYVRLSLIKTQDDFDQLMYYLKDMVKAKRKTPLIKQLFIDQTETASRRPFI.

The signal sequence occupies residues 1-28 (MVESYKKIGSCNKMPCLVILTCIIMSNS). The propeptide occupies 29-38 (LVNNNNMVQA). The EGF-like; atypical domain maps to 51–97 (EAVANINCSEHGRAFLDGIISEGSPKCECNTCYTGPDCSEKIQGCSA). N-linked (GlcNAc...) asparagine glycosylation is present at asparagine 57. Cystine bridges form between cysteine 58–cysteine 77, cysteine 79–cysteine 88, and cysteine 82–cysteine 95. 130–138 (YFFNPVSNF) is a binding site for chloride. N-linked (GlcNAc...) asparagine glycans are attached at residues asparagine 184 and asparagine 229. The residue at position 289 (lysine 289) is an N6-(pyridoxal phosphate)lysine. Asparagine 366 is a glycosylation site (N-linked (GlcNAc...) asparagine). An intrachain disulfide couples cysteine 406 to cysteine 414.

It belongs to the alliinase family. Homodimer. Requires pyridoxal 5'-phosphate as cofactor. Expressed in bulb (at protein level). Expressed in shoots.

It localises to the vacuole. It catalyses the reaction an S-alkyl-L-cysteine S-oxide = an S-alkyl sulfenate + 2-aminoprop-2-enoate. Functionally, able to cleave the C-S bond of sulfoxide derivatives of Cys to produce allicin, thus giving rise to all sulfur compounds which are responsible for most of the properties of garlic, such as the specific smell and flavor as well as the health benefits like blood lipid or blood pressure lowering. The chain is Alliin lyase 1 from Allium sativum (Garlic).